The primary structure comprises 269 residues: uncharacterized protein (269 aa).

Positions 1–22 (MSANGTDQQSDHGHSTSNNKDC) are disordered.

This is an uncharacterized protein from Gallus gallus (Chicken).